The primary structure comprises 160 residues: uncharacterized protein (160 aa).

The signal sequence occupies residues 1 to 29 (MTGKTHIMGGIASCTAAAYYYGFDPVLMA). A run of 2 helical transmembrane segments spans residues 67 to 87 (TFTH…TYIP) and 137 to 157 (QLVL…LFHG).

It to E.coli YdjM.

Its subcellular location is the cell membrane. This is an uncharacterized protein from Bacillus subtilis (strain 168).